The primary structure comprises 272 residues: Soluble interferon gamma receptor OPG193 (272 aa).

The signal sequence occupies residues 1–13 (MRYIIILAVLFIN). N-linked (GlcNAc...) asparagine; by host glycosylation is found at asparagine 42, asparagine 150, and asparagine 267.

The protein belongs to the type II cytokine receptor family. Homodimer. Interacts with host IFNG.

The protein localises to the secreted. Counteracts the antiviral effects of host IFN-gamma. Acts as a soluble IFN-gamma receptor and thus inhibits the interaction between host IFN-gamma and its receptor. This Homo sapiens (Human) protein is Soluble interferon gamma receptor OPG193 (OPG193).